The chain runs to 338 residues: RNA 3'-terminal phosphate cyclase (338 aa).

Residues glutamine 103 and tyrosine 283–glutamine 287 each bind ATP. The Tele-AMP-histidine intermediate role is filled by histidine 308.

The protein belongs to the RNA 3'-terminal cyclase family. Type 1 subfamily.

The protein resides in the cytoplasm. It carries out the reaction a 3'-end 3'-phospho-ribonucleotide-RNA + ATP = a 3'-end 2',3'-cyclophospho-ribonucleotide-RNA + AMP + diphosphate. In terms of biological role, catalyzes the conversion of 3'-phosphate to a 2',3'-cyclic phosphodiester at the end of RNA. The mechanism of action of the enzyme occurs in 3 steps: (A) adenylation of the enzyme by ATP; (B) transfer of adenylate to an RNA-N3'P to produce RNA-N3'PP5'A; (C) and attack of the adjacent 2'-hydroxyl on the 3'-phosphorus in the diester linkage to produce the cyclic end product. The biological role of this enzyme is unknown but it is likely to function in some aspects of cellular RNA processing. The polypeptide is RNA 3'-terminal phosphate cyclase (Shigella sonnei (strain Ss046)).